Reading from the N-terminus, the 307-residue chain is Methionyl-tRNA formyltransferase (307 aa).

110-113 (SLLP) contacts (6S)-5,6,7,8-tetrahydrofolate.

This sequence belongs to the Fmt family.

It carries out the reaction L-methionyl-tRNA(fMet) + (6R)-10-formyltetrahydrofolate = N-formyl-L-methionyl-tRNA(fMet) + (6S)-5,6,7,8-tetrahydrofolate + H(+). Attaches a formyl group to the free amino group of methionyl-tRNA(fMet). The formyl group appears to play a dual role in the initiator identity of N-formylmethionyl-tRNA by promoting its recognition by IF2 and preventing the misappropriation of this tRNA by the elongation apparatus. This is Methionyl-tRNA formyltransferase from Chromobacterium violaceum (strain ATCC 12472 / DSM 30191 / JCM 1249 / CCUG 213 / NBRC 12614 / NCIMB 9131 / NCTC 9757 / MK).